A 67-amino-acid chain; its full sequence is UPF0435 protein SSP0913 (67 aa).

The protein belongs to the UPF0435 family.

The polypeptide is UPF0435 protein SSP0913 (Staphylococcus saprophyticus subsp. saprophyticus (strain ATCC 15305 / DSM 20229 / NCIMB 8711 / NCTC 7292 / S-41)).